We begin with the raw amino-acid sequence, 227 residues long: Rho-related GTP-binding protein RhoN (227 aa).

14–21 (GDAECGKT) provides a ligand contact to GTP. An Effector region motif is present at residues 36-44 (YVPTVFENY). Residues 61-65 (DTSGS) and 119-122 (CKLD) each bind GTP. The segment at 186 to 227 (HRQLRRTDSRRGLQRSTQLSGRPDRGNEGEMHKDRAKSCNLM) is disordered. Basic and acidic residues predominate over residues 207–227 (RPDRGNEGEMHKDRAKSCNLM). Position 224 is a cysteine methyl ester (Cys-224). The S-geranylgeranyl cysteine moiety is linked to residue Cys-224. The propeptide at 225-227 (NLM) is removed in mature form.

Belongs to the small GTPase superfamily. Rho family. Interacts with the Rho-GAP domain of RACGAP1. Interacts with UBXD5. Interacts with PRAG1. Expressed specifically in neurons in the brain and spinal cord and also in hepatic stellate cells.

The protein resides in the cytoplasmic vesicle. It is found in the secretory vesicle. It localises to the acrosome membrane. Its function is as follows. May be specifically involved in neuronal and hepatic functions. Is a C3 toxin-insensitive member of the Rho subfamily. The sequence is that of Rho-related GTP-binding protein RhoN (Rnd2) from Mus musculus (Mouse).